A 289-amino-acid polypeptide reads, in one-letter code: GTPase Era (289 aa).

The region spanning 2–167 is the Era-type G domain; that stretch reads KSGFVSIIGR…LDEICKLLPE (166 aa). A G1 region spans residues 10-17; it reads GRTNAGKS. 10–17 contacts GTP; sequence GRTNAGKS. Positions 36-40 are G2; it reads NATRR. The G3 stretch occupies residues 57 to 60; that stretch reads DTPG. Residues 57-61 and 116-119 contribute to the GTP site; these read DTPGL and TKVD. A G4 region spans residues 116 to 119; that stretch reads TKVD. The interval 146 to 148 is G5; that stretch reads FST. In terms of domain architecture, KH type-2 spans 194 to 274; that stretch reads IYENLSDEIP…FLKLDVVVKK (81 aa).

This sequence belongs to the TRAFAC class TrmE-Era-EngA-EngB-Septin-like GTPase superfamily. Era GTPase family. Monomer.

It is found in the cytoplasm. The protein resides in the cell inner membrane. Its function is as follows. An essential GTPase that binds both GDP and GTP, with rapid nucleotide exchange. Plays a role in 16S rRNA processing and 30S ribosomal subunit biogenesis and possibly also in cell cycle regulation and energy metabolism. The polypeptide is GTPase Era (Campylobacter concisus (strain 13826)).